A 317-amino-acid polypeptide reads, in one-letter code: Lipoyl synthase (317 aa).

C56, C61, C67, C82, C86, C89, and S298 together coordinate [4Fe-4S] cluster. In terms of domain architecture, Radical SAM core spans 68–287 (WEDREATFLI…KEEAEQIGFS (220 aa)).

The protein belongs to the radical SAM superfamily. Lipoyl synthase family. It depends on [4Fe-4S] cluster as a cofactor.

The protein resides in the cytoplasm. It catalyses the reaction [[Fe-S] cluster scaffold protein carrying a second [4Fe-4S](2+) cluster] + N(6)-octanoyl-L-lysyl-[protein] + 2 oxidized [2Fe-2S]-[ferredoxin] + 2 S-adenosyl-L-methionine + 4 H(+) = [[Fe-S] cluster scaffold protein] + N(6)-[(R)-dihydrolipoyl]-L-lysyl-[protein] + 4 Fe(3+) + 2 hydrogen sulfide + 2 5'-deoxyadenosine + 2 L-methionine + 2 reduced [2Fe-2S]-[ferredoxin]. The protein operates within protein modification; protein lipoylation via endogenous pathway; protein N(6)-(lipoyl)lysine from octanoyl-[acyl-carrier-protein]: step 2/2. In terms of biological role, catalyzes the radical-mediated insertion of two sulfur atoms into the C-6 and C-8 positions of the octanoyl moiety bound to the lipoyl domains of lipoate-dependent enzymes, thereby converting the octanoylated domains into lipoylated derivatives. The protein is Lipoyl synthase of Streptomyces coelicolor (strain ATCC BAA-471 / A3(2) / M145).